A 1203-amino-acid chain; its full sequence is Transmembrane channel-like protein 2 (1203 aa).

Disordered stretches follow at residues 1–39 and 64–90; these read MPKS…IDSR and PHTR…EASK. Residues 73–86 show a composition bias toward acidic residues; the sequence is FDDDDDEFDEEDDK. The helical transmembrane segment at 191–213 threads the bilayer; the sequence is VLGVNITITFIMCMFVVIPEWLA. Asparagine 225 carries an N-linked (GlcNAc...) asparagine glycan. The next 6 helical transmembrane spans lie at 276–298, 369–391, 406–428, 441–463, 665–687, and 714–736; these read YRVP…FIIL, FVAR…WAIM, ATAI…LGKI, LGRV…MLQL, MIWL…LIIL, and FFFA…VIAS. Asparagine 748 carries N-linked (GlcNAc...) asparagine glycosylation. Residues 780 to 802 form a helical membrane-spanning segment; sequence IIIPVLVLLSLVIYFLIAMVTGL. Disordered regions lie at residues 826 to 908, 927 to 1039, 1059 to 1087, and 1112 to 1203; these read ELAG…SLPP, KYGR…IEKQ, ATVE…HEPL, and NDET…SDND. The span at 865–874 shows a compositional bias: polar residues; that stretch reads NRSTAKSVSG. The segment covering 898–908 has biased composition (low complexity); the sequence is DSESTTSSLPP. Over residues 927-945 the composition is skewed to basic and acidic residues; sequence KYGRHDDIEMEEGGGRLRE. 2 stretches are compositionally biased toward low complexity: residues 973–997 and 1022–1035; these read QSFD…PSNS and SASS…PSSS. A compositionally biased stretch (polar residues) spans 1061-1076; the sequence is VENSSQDPTRPPSTDD. 2 stretches are compositionally biased toward basic and acidic residues: residues 1133 to 1147 and 1172 to 1203; these read SPRE…KDQQ and PPSE…SDND.

It belongs to the TMC family.

It is found in the membrane. Functionally, probable ion channel. In Caenorhabditis elegans, this protein is Transmembrane channel-like protein 2 (tmc-2).